The following is a 413-amino-acid chain: Gamma-glutamyl phosphate reductase (413 aa).

The protein belongs to the gamma-glutamyl phosphate reductase family.

It localises to the cytoplasm. It carries out the reaction L-glutamate 5-semialdehyde + phosphate + NADP(+) = L-glutamyl 5-phosphate + NADPH + H(+). It participates in amino-acid biosynthesis; L-proline biosynthesis; L-glutamate 5-semialdehyde from L-glutamate: step 2/2. Functionally, catalyzes the NADPH-dependent reduction of L-glutamate 5-phosphate into L-glutamate 5-semialdehyde and phosphate. The product spontaneously undergoes cyclization to form 1-pyrroline-5-carboxylate. This Thermus thermophilus (strain ATCC 27634 / DSM 579 / HB8) protein is Gamma-glutamyl phosphate reductase.